Here is a 189-residue protein sequence, read N- to C-terminus: Mediator of RNA polymerase II transcription subunit 28 (189 aa).

Residues 75-115 adopt a coiled-coil conformation; it reads YMLIKDENQDLSIEIQRKEALLQKHYNRLEEWKACLSDIQQ. The disordered stretch occupies residues 124-147; the sequence is PIGSGMLQGPGGGMPPMGGTPPRP. Residues 129 to 139 show a composition bias toward gly residues; sequence MLQGPGGGMPP.

It belongs to the Mediator complex subunit 28 family. Component of the Mediator complex, which includes at least CDK8, MED4, MED6, MED11, MED14, MED17, MED18, MED20, MED21, MED22, MED27, MED28, MED30 and MED31.

It localises to the nucleus. In terms of biological role, component of the Mediator complex, a coactivator involved in the regulated transcription of nearly all RNA polymerase II-dependent genes. Mediator functions as a bridge to convey information from gene-specific regulatory proteins to the basal RNA polymerase II transcription machinery. Mediator is recruited to promoters by direct interactions with regulatory proteins and serves as a scaffold for the assembly of a functional preinitiation complex with RNA polymerase II and the general transcription factors. The sequence is that of Mediator of RNA polymerase II transcription subunit 28 (MED28) from Drosophila melanogaster (Fruit fly).